The following is a 709-amino-acid chain: Catalase HPII (709 aa).

Over residues 1–26 the composition is skewed to polar residues; sequence MSEQNNEQRSQAAGTDTVDRGNSNAK. The segment at 1-32 is disordered; that stretch reads MSEQNNEQRSQAAGTDTVDRGNSNAKLEQLEA. Catalysis depends on residues H90 and N163. Y377 contacts heme. A disordered region spans residues 419-443; the sequence is RASYEPNSIDGGWPKETPPAARNGG.

This sequence belongs to the catalase family. HPII subfamily. Heme is required as a cofactor.

Its subcellular location is the cytoplasm. The enzyme catalyses 2 H2O2 = O2 + 2 H2O. Decomposes hydrogen peroxide into water and oxygen; serves to protect cells from the toxic effects of hydrogen peroxide. The polypeptide is Catalase HPII (katE) (Pseudomonas aeruginosa (strain ATCC 15692 / DSM 22644 / CIP 104116 / JCM 14847 / LMG 12228 / 1C / PRS 101 / PAO1)).